The primary structure comprises 221 residues: Serotriflin (221 aa).

The SCP domain maps to 19-147 (LDKHNALRRS…SYNYYYVCHY (129 aa)). N-linked (GlcNAc...) asparagine glycosylation is present at Asn48. 8 cysteine pairs are disulfide-bonded: Cys56–Cys134, Cys73–Cys148, Cys129–Cys145, Cys167–Cys174, Cys170–Cys179, Cys183–Cys216, Cys192–Cys210, and Cys201–Cys214. Residues 183-216 (CKHVDRYSNCNSLVQQISCQSNNMNTDCPASCFC) enclose the ShKT domain.

As to quaternary structure, forms a stable, non-covalent complex with SSP-2.

Its subcellular location is the secreted. The protein is Serotriflin of Protobothrops flavoviridis (Habu).